The primary structure comprises 185 residues: Orotate phosphoribosyltransferase (185 aa).

5-phospho-alpha-D-ribose 1-diphosphate-binding positions include R102, K103, K106, H108, and 128–136 (DDVITTGGS). Residues T132 and R160 each contribute to the orotate site.

It belongs to the purine/pyrimidine phosphoribosyltransferase family. PyrE subfamily. In terms of assembly, homodimer. It depends on Mg(2+) as a cofactor.

It carries out the reaction orotidine 5'-phosphate + diphosphate = orotate + 5-phospho-alpha-D-ribose 1-diphosphate. Its pathway is pyrimidine metabolism; UMP biosynthesis via de novo pathway; UMP from orotate: step 1/2. Its function is as follows. Catalyzes the transfer of a ribosyl phosphate group from 5-phosphoribose 1-diphosphate to orotate, leading to the formation of orotidine monophosphate (OMP). This Leptospira biflexa serovar Patoc (strain Patoc 1 / Ames) protein is Orotate phosphoribosyltransferase.